A 126-amino-acid chain; its full sequence is Larval cuticle protein 2 (126 aa).

The first 16 residues, 1 to 16, serve as a signal peptide directing secretion; sequence MFKFVMVFAVLGLAAA. The 62-residue stretch at 39-100 folds into the Chitin-binding type R&amp;R domain; it reads ADGFDTDLVV…PVGAVLPTPP (62 aa).

Functionally, component of the larval cuticle. The protein is Larval cuticle protein 2 (Lcp2) of Drosophila miranda (Fruit fly).